The sequence spans 907 residues: Leucine-rich repeat-containing G-protein coupled receptor 5 (907 aa).

A signal peptide spans 1-21 (MDTSRLGVLLSLPVLLQLATG). Residues 22–561 (GSSPRSGVLL…EHLLDGWLIR (540 aa)) lie on the Extracellular side of the membrane. Residues 25–66 (PRSGVLLRGCPTHCHCEPDGRMLLRVDCSDLGLSELPSNLSV) form the LRRNT domain. Disulfide bonds link Cys-34-Cys-40 and Cys-38-Cys-52. 2 N-linked (GlcNAc...) asparagine glycosylation sites follow: Asn-63 and Asn-77. 16 LRR repeats span residues 67 to 90 (FTSYLDLSMNNISQLLPNPLPSLR), 91 to 112 (FLEELRLAGNALTYIPKGAFTG), 115 to 136 (SLKVLMLQNNQLRHVPTEALQN), 139 to 160 (SLQSLRLDANHISYVPPSCFSG), 163 to 184 (SLRHLWLDDNALTEIPVQAFRS), 187 to 208 (ALQAMTLALNKIHHIPDYAFGN), 211 to 232 (SLVVLHLHNNRIHSLGKKCFDG), 235 to 256 (SLETLDLNYNNLDEFPTAIRTL), 258 to 279 (NLKELGFHSNNIRSIPEKAFVG), 282 to 303 (SLITIHFYDNPIQFVGRSAFQH), 306 to 328 (ELRTLTLNGASQITEFPDLTGTA), 329 to 350 (NLESLTLTGAQISSLPQTVCNQ), 353 to 374 (NLQVLDLSYNLLEDLPSFSVCQ), 375 to 396 (KLQKIDLRHNEIYEIKVDTFQQ), 399 to 420 (SLRSLNLAWNKIAIIHPNAFST), and 423 to 446 (SLIKLDLSSNLLSSFPITGLHGLT). An N-linked (GlcNAc...) asparagine glycan is attached at Asn-208. A disulfide bridge connects residues Cys-348 and Cys-373. Cys-479 and Cys-541 form a disulfide bridge. The N-linked (GlcNAc...) asparagine glycan is linked to Asn-500. Residues 562–582 (IGVWTIAVLALTCNALVTSTV) traverse the membrane as a helical segment. Residues 583-593 (FRSPLYISPIK) lie on the Cytoplasmic side of the membrane. A helical transmembrane segment spans residues 594 to 614 (LLIGVIAAVNMLTGVSSAVLA). Residues 615–638 (GVDAFTFGSFARHGAWWENGVGCH) are Extracellular-facing. A disulfide bridge links Cys-637 with Cys-712. The chain crosses the membrane as a helical span at residues 639 to 659 (VIGFLSIFASESSVFLLTLAA). The Cytoplasmic segment spans residues 660 to 682 (LERGFSVKYSAKFETKAPFSSLK). Residues 683–703 (VIILLCALLALTMAAVPLLGG) traverse the membrane as a helical segment. Over 704-722 (SKYGASPLCLPLPFGEPST) the chain is Extracellular. The chain crosses the membrane as a helical span at residues 723–743 (MGYMVALILLNSLCFLMMTIA). Over 744–767 (YTKLYCNLDKGDLENIWDCSMVKH) the chain is Cytoplasmic. Residues 768 to 788 (IALLLFTNCILNCPVAFLSFS) form a helical membrane-spanning segment. Over 789-802 (SLINLTFISPEVIK) the chain is Extracellular. Asn-792 carries N-linked (GlcNAc...) asparagine glycosylation. Residues 803–823 (FILLVVVPLPACLNPLLYILF) form a helical membrane-spanning segment. The Cytoplasmic segment spans residues 824 to 907 (NPHFKEDLVS…LSSVAFVPCL (84 aa)).

This sequence belongs to the G-protein coupled receptor 1 family. In terms of assembly, identified in a complex composed of RNF43, LGR5 and RSPO1. Also interacts with other R-spondin ligands, including RSPO2, RSPO3 and RSPO4. Expressed in skeletal muscle, placenta, spinal cord, and various region of brain. Expressed at the base of crypts in colonic and small mucosa stem cells. In premalignant cancer expression is not restricted to the cript base. Overexpressed in cancers of the ovary, colon and liver.

It is found in the cell membrane. The protein localises to the golgi apparatus. The protein resides in the trans-Golgi network membrane. Receptor for R-spondins that potentiates the canonical Wnt signaling pathway and acts as a stem cell marker of the intestinal epithelium and the hair follicle. Upon binding to R-spondins (RSPO1, RSPO2, RSPO3 or RSPO4), associates with phosphorylated LRP6 and frizzled receptors that are activated by extracellular Wnt receptors, triggering the canonical Wnt signaling pathway to increase expression of target genes. In contrast to classical G-protein coupled receptors, does not activate heterotrimeric G-proteins to transduce the signal. Involved in the development and/or maintenance of the adult intestinal stem cells during postembryonic development. The polypeptide is Leucine-rich repeat-containing G-protein coupled receptor 5 (LGR5) (Homo sapiens (Human)).